A 562-amino-acid chain; its full sequence is NAD-dependent malic enzyme (562 aa).

Catalysis depends on Tyr101, which acts as the Proton donor. Residue Arg154 coordinates NAD(+). Residue Lys172 is the Proton acceptor of the active site. Positions 243, 244, and 267 each coordinate a divalent metal cation. NAD(+) contacts are provided by Asp267 and Asn415.

This sequence belongs to the malic enzymes family. As to quaternary structure, homotetramer. Mg(2+) is required as a cofactor. Mn(2+) serves as cofactor.

It carries out the reaction (S)-malate + NAD(+) = pyruvate + CO2 + NADH. The enzyme catalyses oxaloacetate + H(+) = pyruvate + CO2. This chain is NAD-dependent malic enzyme, found in Vibrio campbellii (strain ATCC BAA-1116).